The chain runs to 227 residues: ATP-dependent dethiobiotin synthetase BioD (227 aa).

Residue 12-17 (DAGKTH) coordinates ATP. Mg(2+) is bound at residue T16. The active site involves K37. Position 41 (S41) interacts with substrate. Residues D54, 116–119 (EGAG), 176–177 (NQ), and 205–207 (PYS) each bind ATP. Residues D54 and E116 each contribute to the Mg(2+) site.

Belongs to the dethiobiotin synthetase family. In terms of assembly, homodimer. Requires Mg(2+) as cofactor.

It localises to the cytoplasm. It catalyses the reaction (7R,8S)-7,8-diammoniononanoate + CO2 + ATP = (4R,5S)-dethiobiotin + ADP + phosphate + 3 H(+). It functions in the pathway cofactor biosynthesis; biotin biosynthesis; biotin from 7,8-diaminononanoate: step 1/2. Functionally, catalyzes a mechanistically unusual reaction, the ATP-dependent insertion of CO2 between the N7 and N8 nitrogen atoms of 7,8-diaminopelargonic acid (DAPA, also called 7,8-diammoniononanoate) to form a ureido ring. This Pseudoalteromonas translucida (strain TAC 125) protein is ATP-dependent dethiobiotin synthetase BioD.